The chain runs to 271 residues: MFSIQQPLLVFSDLDGTLLDSHSYDWQPAAPWLSRLREGNVPVILCSSKTSAEMLYLQKTLGLQGLPLIAENGAVIQLAEQWQDIDGFPRIISGISHGEISQVLNTLREKEHFKFTTFDDVDDATIAEWTGLSRSQAALTQLHEASVTLIWRDSDERMAQFTARLNELGLQFMQGARFWHVLDASAGKDQAANWIIATYQQLSGKRPTTLGLGDGPNDAPLLEVMDYAVIVKGLNREGVHLHDEDPTRVWRTQREGPEGWREGLDHFFSAR.

Residue aspartate 13 is the Nucleophile of the active site. Mg(2+) is bound by residues aspartate 13, aspartate 15, and aspartate 214.

Belongs to the HAD-like hydrolase superfamily. MPGP family. Mg(2+) is required as a cofactor.

It is found in the cytoplasm. It carries out the reaction 2-O-(alpha-D-mannosyl)-3-phosphoglycerate + H2O = (2R)-2-O-(alpha-D-mannosyl)-glycerate + phosphate. The protein is Mannosyl-3-phosphoglycerate phosphatase of Escherichia coli (strain SMS-3-5 / SECEC).